Consider the following 377-residue polypeptide: RING-H2 finger protein ATL22 (377 aa).

An N-terminal signal peptide occupies residues 1 to 23; that stretch reads MTSKLLPLLLNLIFLFFFPLLNA. Residues 244 to 264 traverse the membrane as a helical segment; the sequence is IMCLSLVGPLTALTFCVGLVM. The segment at 327–369 adopts an RING-type; atypical zinc-finger fold; sequence CPICLSEYATKETVRCLPECEHCFHTECIDAWLKLHSSCPVCR.

Belongs to the RING-type zinc finger family. ATL subfamily.

It is found in the membrane. It catalyses the reaction S-ubiquitinyl-[E2 ubiquitin-conjugating enzyme]-L-cysteine + [acceptor protein]-L-lysine = [E2 ubiquitin-conjugating enzyme]-L-cysteine + N(6)-ubiquitinyl-[acceptor protein]-L-lysine.. It participates in protein modification; protein ubiquitination. The protein is RING-H2 finger protein ATL22 (ATL22) of Arabidopsis thaliana (Mouse-ear cress).